The primary structure comprises 79 residues: Putative antitoxin MM_2475 (79 aa).

Belongs to the UPF0330 family.

Possibly the antitoxin component of a type II toxin-antitoxin (TA) system. The protein is Putative antitoxin MM_2475 of Methanosarcina mazei (strain ATCC BAA-159 / DSM 3647 / Goe1 / Go1 / JCM 11833 / OCM 88) (Methanosarcina frisia).